The chain runs to 327 residues: Malate dehydrogenase (327 aa).

11-17 (GAAGQIS) lines the NAD(+) pocket. Substrate is bound by residues Arg92 and Arg98. NAD(+) contacts are provided by residues Asn105, Gln112, and 129–131 (VGN). Substrate contacts are provided by Asn131 and Arg162. His187 serves as the catalytic Proton acceptor.

Belongs to the LDH/MDH superfamily. MDH type 2 family.

It catalyses the reaction (S)-malate + NAD(+) = oxaloacetate + NADH + H(+). Catalyzes the reversible oxidation of malate to oxaloacetate. The protein is Malate dehydrogenase of Saccharophagus degradans (strain 2-40 / ATCC 43961 / DSM 17024).